A 57-amino-acid chain; its full sequence is MAVPKKRTSMSKKHIRRNYWKRKGYKAAVKAFSLGKSVSTGHSKSFFVQQTTTKTNK.

The protein belongs to the bacterial ribosomal protein bL32 family.

The protein resides in the plastid. The protein localises to the chloroplast. This is Large ribosomal subunit protein bL32c from Amborella trichopoda.